The sequence spans 120 residues: NAD(P)H-quinone oxidoreductase subunit 3, chloroplastic (120 aa).

3 helical membrane passes run 9 to 29 (IFWV…LISG), 64 to 84 (MFAL…PWAM), and 88 to 108 (VLGV…IVGL).

It belongs to the complex I subunit 3 family. In terms of assembly, NDH is composed of at least 16 different subunits, 5 of which are encoded in the nucleus.

Its subcellular location is the plastid. The protein resides in the chloroplast thylakoid membrane. The catalysed reaction is a plastoquinone + NADH + (n+1) H(+)(in) = a plastoquinol + NAD(+) + n H(+)(out). It catalyses the reaction a plastoquinone + NADPH + (n+1) H(+)(in) = a plastoquinol + NADP(+) + n H(+)(out). Its function is as follows. NDH shuttles electrons from NAD(P)H:plastoquinone, via FMN and iron-sulfur (Fe-S) centers, to quinones in the photosynthetic chain and possibly in a chloroplast respiratory chain. The immediate electron acceptor for the enzyme in this species is believed to be plastoquinone. Couples the redox reaction to proton translocation, and thus conserves the redox energy in a proton gradient. The sequence is that of NAD(P)H-quinone oxidoreductase subunit 3, chloroplastic from Cucumis sativus (Cucumber).